A 435-amino-acid chain; its full sequence is Histidine--tRNA ligase (435 aa).

The protein belongs to the class-II aminoacyl-tRNA synthetase family. In terms of assembly, homodimer.

It is found in the cytoplasm. It catalyses the reaction tRNA(His) + L-histidine + ATP = L-histidyl-tRNA(His) + AMP + diphosphate + H(+). In Synechococcus elongatus (strain ATCC 33912 / PCC 7942 / FACHB-805) (Anacystis nidulans R2), this protein is Histidine--tRNA ligase.